The following is a 977-amino-acid chain: Protein bric-a-brac 1 (977 aa).

Positions M1–S97 are disordered. The span at P34–Q43 shows a compositional bias: polar residues. Residues Q44–Q69 are compositionally biased toward basic and acidic residues. The span at S80–S97 shows a compositional bias: low complexity. The 66-residue stretch at V127–Q192 folds into the BTB domain. Disordered regions lie at residues A221–E249, E281–V348, D362–L434, and S447–L497. Over residues E316–D330 the composition is skewed to basic and acidic residues. Positions P372–P396 are enriched in low complexity. Residues G469–S491 show a composition bias toward gly residues. An HTH psq-type domain is found at F559–M611. Residues R569–P614 constitute a DNA-binding region (H-T-H motif). The segment at residues D621 to R632 is a DNA-binding region (a.T hook). 2 disordered regions span residues A772–L900 and V925–E977. Low complexity-rich tracts occupy residues M804–A816, Q838–Q853, A862–S872, and V925–G966.

As to expression, leg imaginal disk at the central region of the tarsus and in eye antenna disk at the basal cylinder.

Its subcellular location is the nucleus. Its function is as follows. Probably acts as a transcriptional regulator. Required for the specification of the tarsal segment. Also involved in antenna development. This is Protein bric-a-brac 1 (bab1) from Drosophila melanogaster (Fruit fly).